The following is a 296-amino-acid chain: Release factor glutamine methyltransferase (296 aa).

S-adenosyl-L-methionine-binding positions include 133–137, aspartate 156, and asparagine 201; that span reads GTGSG. 201-204 serves as a coordination point for substrate; the sequence is NPPY.

It belongs to the protein N5-glutamine methyltransferase family. PrmC subfamily.

It carries out the reaction L-glutaminyl-[peptide chain release factor] + S-adenosyl-L-methionine = N(5)-methyl-L-glutaminyl-[peptide chain release factor] + S-adenosyl-L-homocysteine + H(+). In terms of biological role, methylates the class 1 translation termination release factors RF1/PrfA and RF2/PrfB on the glutamine residue of the universally conserved GGQ motif. In Rhodopirellula baltica (strain DSM 10527 / NCIMB 13988 / SH1), this protein is Release factor glutamine methyltransferase.